We begin with the raw amino-acid sequence, 339 residues long: tRNA N6-adenosine threonylcarbamoyltransferase (339 aa).

Residues His-114 and His-118 each contribute to the Fe cation site. Substrate contacts are provided by residues 137 to 141 (VVSGG), Asp-170, Gly-183, Asp-187, and Asn-277. Asp-305 is a Fe cation binding site.

Belongs to the KAE1 / TsaD family. Fe(2+) is required as a cofactor.

The protein resides in the cytoplasm. It carries out the reaction L-threonylcarbamoyladenylate + adenosine(37) in tRNA = N(6)-L-threonylcarbamoyladenosine(37) in tRNA + AMP + H(+). In terms of biological role, required for the formation of a threonylcarbamoyl group on adenosine at position 37 (t(6)A37) in tRNAs that read codons beginning with adenine. Is involved in the transfer of the threonylcarbamoyl moiety of threonylcarbamoyl-AMP (TC-AMP) to the N6 group of A37, together with TsaE and TsaB. TsaD likely plays a direct catalytic role in this reaction. This Clostridium perfringens (strain ATCC 13124 / DSM 756 / JCM 1290 / NCIMB 6125 / NCTC 8237 / Type A) protein is tRNA N6-adenosine threonylcarbamoyltransferase.